We begin with the raw amino-acid sequence, 409 residues long: MSKKVQKVVLAYSGGLDTSIILKWLQTTYGAEVVTFTADLGQGEELEPARRKAQLLGIKDENIFIEDLREEFVRDYVFPMFRANAVYEGQYLLGTSIARPLIAKKQIEIAEKVGADAVAHGATGKGNDQVRFELGYYALKPDITIIAPWREWDLRSREQLIAFAEQHQIPIAKDKRGEAPFSVDANLLHASSEGKVLEDPAQEVPDYVYSRTIDPEAAPDQPTYITIDFEQGDAVAIDGGKMSPATLLAKLNELGRANGIGRLDLVENRFVGMKSRGMYETPGGAILLVAHRGIEQITLDRGAAHLKDELMPKYAELVYNGFWFSPEREMLQAAIDQSQRYVTGQVRLKLYKGNVILVGRDSAYSLYDQDLVTFEEGAVAYDHRDAAGFIKLNALRLRTLGQRRKKLGL.

Residues 11–19 (AYSGGLDTS) and A38 each bind ATP. Positions 91 and 96 each coordinate L-citrulline. G121 lines the ATP pocket. T123, N127, and D128 together coordinate L-aspartate. N127 serves as a coordination point for L-citrulline. R131, S182, S191, E267, and Y279 together coordinate L-citrulline.

The protein belongs to the argininosuccinate synthase family. Type 1 subfamily. As to quaternary structure, homotetramer.

Its subcellular location is the cytoplasm. The enzyme catalyses L-citrulline + L-aspartate + ATP = 2-(N(omega)-L-arginino)succinate + AMP + diphosphate + H(+). It functions in the pathway amino-acid biosynthesis; L-arginine biosynthesis; L-arginine from L-ornithine and carbamoyl phosphate: step 2/3. The protein is Argininosuccinate synthase of Nitrobacter winogradskyi (strain ATCC 25391 / DSM 10237 / CIP 104748 / NCIMB 11846 / Nb-255).